A 1366-amino-acid polypeptide reads, in one-letter code: DNA-directed RNA polymerase subunit beta' (1366 aa).

Positions 1–20 (MTSSKPKKTSRVRKTTKNSK) are enriched in basic residues. Positions 1–34 (MTSSKPKKTSRVRKTTKNSKKNNPLTMPALAKTP) are disordered. Zn(2+) is bound by residues cysteine 248, cysteine 315, cysteine 322, and cysteine 325. A disordered region spans residues 1291–1366 (YTVDMPQSPS…LQEEGLLSDE (76 aa)). The segment covering 1295–1305 (MPQSPSVSSTA) has biased composition (polar residues). A compositionally biased stretch (low complexity) spans 1354–1366 (LEGLQEEGLLSDE).

Belongs to the RNA polymerase beta' chain family. RpoC2 subfamily. In cyanobacteria the RNAP catalytic core is composed of 2 alpha, 1 beta, 1 beta', 1 gamma and 1 omega subunit. When a sigma factor is associated with the core the holoenzyme is formed, which can initiate transcription. Zn(2+) is required as a cofactor.

The enzyme catalyses RNA(n) + a ribonucleoside 5'-triphosphate = RNA(n+1) + diphosphate. DNA-dependent RNA polymerase catalyzes the transcription of DNA into RNA using the four ribonucleoside triphosphates as substrates. The polypeptide is DNA-directed RNA polymerase subunit beta' (Prochlorococcus marinus (strain MIT 9301)).